The chain runs to 163 residues: Nucleotide-binding protein NTHI1194 (163 aa).

It belongs to the YajQ family.

Functionally, nucleotide-binding protein. In Haemophilus influenzae (strain 86-028NP), this protein is Nucleotide-binding protein NTHI1194.